The chain runs to 2871 residues: Fibrillin-1 (2871 aa).

A signal peptide spans 1-24 (MRRGRLLEIALGFTVLLASYTSHG). A propeptide spanning residues 25 to 44 (ADANLEAGNVKETRASRAKR) is cleaved from the precursor. The segment at 45–81 (RGGGGHDALKGPNVCGSRYNAYCCPGWKTLPGGNQCI) is fibrillin unique N-terminal (FUN) domain. The interval 45-450 (RGGGGHDALK…PPRVLPVNVT (406 aa)) is N-terminal domain. Cystine bridges form between Cys-59-Cys-68, Cys-67-Cys-80, Cys-85-Cys-94, Cys-89-Cys-100, Cys-102-Cys-111, Cys-119-Cys-129, Cys-123-Cys-134, Cys-136-Cys-145, Cys-150-Cys-160, Cys-154-Cys-166, and Cys-168-Cys-177. EGF-like domains are found at residues 81–112 (IVPI…PSCG), 115–146 (SIQH…THCG), and 147–178 (QPVC…PQCE). Residues 119-329 (CNIRCMNGGS…YTSPDGTRCI (211 aa)) are interaction with MFAP4. The TB 1 domain maps to 184–236 (GPCFTVISNQMCQGQLSGIVCTKTLCCATVGRAWGHPCEMCPAQPHPCRRGFI). Residues 195 to 221 (CQGQLSGIVCTKTLCCATVGRAWGHPC) are hybrid domain 1. In terms of domain architecture, EGF-like 4; calcium-binding spans 246–287 (DVDECQAIPGLCQGGNCINTVGSFECKCPAGHKLNEVSQKCE). Disulfide bonds link Cys-250–Cys-262, Cys-257–Cys-271, Cys-273–Cys-286, Cys-292–Cys-304, Cys-299–Cys-313, and Cys-315–Cys-328. The O-linked (Glc) serine glycan is linked to Ser-268. The EGF-like 5; calcium-binding domain occupies 288–329 (DIDECSTIPGICEGGECTNTVSSYFCKCPPGFYTSPDGTRCI). Positions 334–389 (GYCYTALTNGRCSNQLPQSITKMQCCCDAGRCWSPGVTVAPEMCPIRATEDFNKLC) constitute a TB 2 domain. N-linked (GlcNAc...) asparagine glycosylation occurs at Asn-448. Residues 449-489 (VTDYCQLVRYLCQNGRCIPTPGSYRCECNKGFQLDLRGECI) enclose the EGF-like 6 domain. 15 cysteine pairs are disulfide-bonded: Cys-453/Cys-465, Cys-460/Cys-474, Cys-476/Cys-488, Cys-494/Cys-504, Cys-499/Cys-513, Cys-515/Cys-528, Cys-534/Cys-546, Cys-541/Cys-555, Cys-557/Cys-570, Cys-576/Cys-587, Cys-582/Cys-596, Cys-598/Cys-611, Cys-617/Cys-628, Cys-623/Cys-637, and Cys-639/Cys-652. A glycan (O-linked (Glc) serine) is linked at Ser-471. In terms of domain architecture, EGF-like 7; calcium-binding spans 490–529 (DVDECEKNPCAGGECINNQGSYTCQCRAGYQSTLTRTECR). O-linked (Glc) serine glycosylation occurs at Ser-510. The 42-residue stretch at 530–571 (DIDECLQNGRICNNGRCINTDGSFHCVCNAGFHVTRDGKNCE) folds into the EGF-like 8; calcium-binding domain. Ser-552 carries an O-linked (Glc) serine glycan. Positions 572-612 (DMDECSIRNMCLNGMCINEDGSFKCICKPGFQLASDGRYCK) constitute an EGF-like 9; calcium-binding domain. Ser-593 carries an O-linked (Glc) serine glycan. The EGF-like 10; calcium-binding domain occupies 613–653 (DINECETPGICMNGRCVNTDGSYRCECFPGLAVGLDGRVCV). The O-linked (Glc) serine glycan is linked to Ser-634. One can recognise a TB 3 domain in the interval 659-711 (STCYGGYKRGQCIKPLFGAVTKSECCCASTEYAFGEPCQPCPAQNSAEYQALC). One can recognise an EGF-like 11; calcium-binding domain in the interval 723–764 (DINECALDPDICPNGICENLRGTYKCICNSGYEVDSTGKNCV). Disulfide bonds link Cys-727–Cys-739, Cys-734–Cys-748, Cys-750–Cys-763, Cys-769–Cys-781, Cys-776–Cys-790, Cys-792–Cys-805, Cys-811–Cys-821, Cys-816–Cys-830, Cys-832–Cys-845, Cys-853–Cys-875, Cys-862–Cys-887, Cys-876–Cys-890, Cys-896–Cys-908, Cys-914–Cys-926, Cys-921–Cys-935, and Cys-937–Cys-950. Residues 765–806 (DINECVLNSLLCDNGQCRNTPGSFVCTCPKGFIYKPDLKTCE) enclose the EGF-like 12; calcium-binding domain. The O-linked (Glc) serine glycan is linked to Ser-787. The EGF-like 13; calcium-binding domain occupies 807–846 (DIDECESSPCINGVCKNSPGSFICECSSESTLDPTKTICI). Ser-827 is a glycosylation site (O-linked (Glc) serine). The TB 4 domain occupies 851 to 902 (GTCWQTVIDGRCEININGATLKSQCCSSLGAAWGSPCTLCQVDPICGKGYSR). Positions 862–887 (CEININGATLKSQCCSSLGAAWGSPC) are hybrid domain 2. Residues 910–951 (DIDECEVFPGVCKNGLCVNTRGSFKCQCPSGMTLDATGRICL) form the EGF-like 14; calcium-binding domain. The region spanning 956-1008 (ETCFLRYEDEECTLPIAGRHRMDACCCSVGAAWGTEECEECPMRNTPEYEELC) is the TB 5 domain. The EGF-like 15; calcium-binding domain occupies 1028–1069 (DINECKMIPSLCTHGKCRNTIGSFKCRCDSGFALDSEERNCT). 46 cysteine pairs are disulfide-bonded: Cys-1032–Cys-1044, Cys-1039–Cys-1053, Cys-1055–Cys-1068, Cys-1074–Cys-1086, Cys-1081–Cys-1095, Cys-1097–Cys-1111, Cys-1117–Cys-1129, Cys-1124–Cys-1138, Cys-1140–Cys-1153, Cys-1159–Cys-1171, Cys-1166–Cys-1180, Cys-1182–Cys-1195, Cys-1201–Cys-1212, Cys-1208–Cys-1221, Cys-1223–Cys-1236, Cys-1242–Cys-1254, Cys-1249–Cys-1263, Cys-1265–Cys-1278, Cys-1284–Cys-1296, Cys-1291–Cys-1305, Cys-1307–Cys-1320, Cys-1326–Cys-1339, Cys-1333–Cys-1348, Cys-1350–Cys-1361, Cys-1367–Cys-1380, Cys-1374–Cys-1389, Cys-1391–Cys-1402, Cys-1408–Cys-1420, Cys-1415–Cys-1429, Cys-1431–Cys-1444, Cys-1450–Cys-1461, Cys-1456–Cys-1470, Cys-1472–Cys-1485, Cys-1491–Cys-1502, Cys-1497–Cys-1511, Cys-1513–Cys-1526, Cys-1534–Cys-1562, Cys-1549–Cys-1574, Cys-1563–Cys-1577, Cys-1564–Cys-1589, Cys-1610–Cys-1622, Cys-1617–Cys-1631, Cys-1633–Cys-1646, Cys-1652–Cys-1663, Cys-1658–Cys-1672, and Cys-1674–Cys-1687. Ser-1050 carries an O-linked (Glc) serine glycan. N-linked (GlcNAc...) asparagine glycosylation occurs at Asn-1067. The region spanning 1070–1112 (DIDECRISPDLCGRGQCVNTPGDFECKCDEGYESGFMMMKNCM) is the EGF-like 16; calcium-binding domain. Residues 1113–1154 (DIDECQRDPLLCRGGVCHNTEGSYRCECPPGHQLSPNISACI) form the EGF-like 17; calcium-binding domain. The O-linked (Glc) serine glycan is linked to Ser-1135. Asn-1149 carries N-linked (GlcNAc...) asparagine glycosylation. The EGF-like 18; calcium-binding domain maps to 1155–1196 (DINECELSAHLCPNGRCVNLIGKYQCACNPGYHSTPDRLFCV). Residues 1197–1237 (DIDECSIMNGGCETFCTNSEGSYECSCQPGFALMPDQRSCT) form the EGF-like 19; calcium-binding domain. A glycan (O-linked (Glc) serine) is linked at Ser-1218. An EGF-like 20; calcium-binding domain is found at 1238–1279 (DIDECEDNPNICDGGQCTNIPGEYRCLCYDGFMASEDMKTCV). Residues 1280 to 1321 (DVNECDLNPNICLSGTCENTKGSFICHCDMGYSGKKGKTGCT) form the EGF-like 21; calcium-binding domain. Residue Ser-1302 is glycosylated (O-linked (Glc) serine). Positions 1322–1362 (DINECEIGAHNCGKHAVCTNTAGSFKCSCSPGWIGDGIKCT) constitute an EGF-like 22; calcium-binding domain. A glycan (O-linked (Glc) serine) is linked at Ser-1345. The region spanning 1363 to 1403 (DLDECSNGTHMCSQHADCKNTMGSYRCLCKEGYTGDGFTCT) is the EGF-like 23; calcium-binding domain. The N-linked (GlcNAc...) asparagine glycan is linked to Asn-1369. O-linked (Glc) serine glycosylation is present at Ser-1386. The region spanning 1404 to 1445 (DLDECSENLNLCGNGQCLNAPGGYRCECDMGFVPSADGKACE) is the EGF-like 24; calcium-binding domain. The EGF-like 25; calcium-binding domain maps to 1446–1486 (DIDECSLPNICVFGTCHNLPGLFRCECEIGYELDRSGGNCT). The N-linked (GlcNAc...) asparagine glycan is linked to Asn-1484. Residues 1487 to 1527 (DVNECLDPTTCISGNCVNTPGSYICDCPPDFELNPTRVGCV) form the EGF-like 26; calcium-binding domain. Residue Ser-1508 is glycosylated (O-linked (Glc) serine). Positions 1528-2731 (DTRSGNCYLD…GYPKRGRKRR (1204 aa)) are C-terminal domain. The TB 6 domain occupies 1532-1589 (GNCYLDIRPRGDNGDTACSNEIGVGVSKASCCCSLGKAWGTPCEMCPAVNTSEYKILC). The short motif at 1541 to 1543 (RGD) is the Cell attachment site element. Asn-1581 is a glycosylation site (N-linked (GlcNAc...) asparagine). The region spanning 1606 to 1647 (DIDECQELPGLCQGGKCINTFGSFQCRCPTGYYLNEDTRVCD) is the EGF-like 27; calcium-binding domain. Residue Ser-1628 is glycosylated (O-linked (Glc) serine). The EGF-like 28; calcium-binding domain maps to 1648–1688 (DVNECETPGICGPGTCYNTVGNYTCICPPDYMQVNGGNNCM). An N-linked (GlcNAc...) asparagine glycan is attached at Asn-1669. A TB 7 domain is found at 1693 to 1748 (SLCYRNYYADNQTCDGELLFNMTKKMCCCSYNIGRAWNKPCEQCPIPSTDEFATLC). 2 N-linked (GlcNAc...) asparagine glycosylation sites follow: Asn-1703 and Asn-1713. The region spanning 1766–1807 (DIDECREIPGVCENGVCINMVGSFRCECPVGFFYNDKLLVCE) is the EGF-like 29; calcium-binding domain. Disulfide bonds link Cys-1770–Cys-1782, Cys-1777–Cys-1791, Cys-1793–Cys-1806, Cys-1812–Cys-1824, Cys-1818–Cys-1833, Cys-1835–Cys-1847, Cys-1853–Cys-1865, Cys-1860–Cys-1874, Cys-1876–Cys-1889, Cys-1895–Cys-1905, Cys-1900–Cys-1914, Cys-1916–Cys-1928, Cys-1934–Cys-1947, Cys-1942–Cys-1956, Cys-1958–Cys-1971, Cys-1977–Cys-1989, Cys-1984–Cys-1998, Cys-2000–Cys-2011, Cys-2017–Cys-2029, Cys-2024–Cys-2038, Cys-2040–Cys-2053, Cys-2061–Cys-2083, Cys-2070–Cys-2096, Cys-2084–Cys-2099, Cys-2085–Cys-2111, Cys-2131–Cys-2142, Cys-2137–Cys-2151, Cys-2153–Cys-2164, Cys-2170–Cys-2181, Cys-2176–Cys-2190, Cys-2192–Cys-2204, Cys-2210–Cys-2221, Cys-2217–Cys-2230, Cys-2232–Cys-2245, Cys-2251–Cys-2265, Cys-2258–Cys-2274, Cys-2276–Cys-2289, Cys-2295–Cys-2307, Cys-2302–Cys-2316, and Cys-2318–Cys-2331. An EGF-like 30; calcium-binding domain is found at 1808–1848 (DIDECQNGPVCQRNAECINTAGSYRCDCKPGYRFTSTGQCN). A glycan (O-linked (Glc) serine) is linked at Ser-1830. The 42-residue stretch at 1849 to 1890 (DRNECQEIPNICSHGQCIDTVGSFYCLCHTGFKTNDDQTMCL) folds into the EGF-like 31; calcium-binding domain. Ser-1871 carries O-linked (Glc) serine glycosylation. Residues 1891–1929 (DINECERDACGNGTCRNTIGSFNCRCNHGFILSHNNDCI) form the EGF-like 32; calcium-binding domain. Asn-1902 carries N-linked (GlcNAc...) asparagine glycosylation. O-linked (Glc) serine glycosylation is present at Ser-1911. The EGF-like 33; calcium-binding domain occupies 1930-1972 (DVDECASGNGNLCRNGQCINTVGSFQCQCNEGYEVAPDGRTCV). O-linked (Glc) serine glycosylation occurs at Ser-1953. In terms of domain architecture, EGF-like 34; calcium-binding spans 1973-2012 (DINECLLEPRKCAPGTCQNLDGSYRCICPPGYSLQNEKCE). The EGF-like 35; calcium-binding domain maps to 2013–2054 (DIDECVEEPEICALGTCSNTEGSFKCLCPEGFSLSSSGRRCQ). The O-linked (Glc) serine glycan is linked to Ser-2035. In terms of domain architecture, TB 8 spans 2059-2111 (SYCYAKFEGGKCSSPKSRNHSKQECCCALKGEGWGDPCELCPTEPDEAFRQIC). N-linked (GlcNAc...) asparagine glycosylation occurs at Asn-2077. Positions 2127–2165 (DMDECKEPDVCKHGQCINTDGSYRCECPFGYILAGNECV) constitute an EGF-like 36; calcium-binding domain. Ser-2148 carries O-linked (Glc) serine glycosylation. The EGF-like 37; calcium-binding domain maps to 2166-2205 (DTDECSVGNPCGNGTCKNVIGGFECTCEEGFEPGPMMTCE). Asn-2178 is a glycosylation site (N-linked (GlcNAc...) asparagine). The EGF-like 38; calcium-binding domain maps to 2206–2246 (DINECAQNPLLCAFRCVNTYGSYECKCPVGYVLREDRRMCK). O-linked (Glc) serine glycosylation is present at Ser-2227. One can recognise an EGF-like 39; calcium-binding domain in the interval 2247 to 2290 (DEDECEEGKHDCTEKQMECKNLIGTYMCICGPGYQRRPDGEGCV). One can recognise an EGF-like 40; calcium-binding domain in the interval 2291 to 2332 (DENECQTKPGICENGRCLNTRGSYTCECNDGFTASPNQDECL). A glycan (O-linked (Glc) serine) is linked at Ser-2313. The TB 9 domain maps to 2337 to 2390 (GYCFTEVLQNMCQIGSSNRNPVTKSECCCDGGRGWGPHCEICPFQGTVAFKKLC). Residues 2402-2443 (DIDECKVIHDVCRNGECVNDRGSYHCICKTGYTPDITGTSCV) form the EGF-like 41; calcium-binding domain. Cystine bridges form between Cys-2406/Cys-2418, Cys-2413/Cys-2427, Cys-2429/Cys-2442, Cys-2448/Cys-2459, Cys-2455/Cys-2468, Cys-2470/Cys-2483, Cys-2489/Cys-2500, Cys-2496/Cys-2509, Cys-2511/Cys-2522, Cys-2528/Cys-2541, Cys-2535/Cys-2550, Cys-2552/Cys-2565, Cys-2571/Cys-2581, Cys-2577/Cys-2590, Cys-2592/Cys-2605, Cys-2611/Cys-2622, Cys-2617/Cys-2631, Cys-2633/Cys-2646, Cys-2652/Cys-2663, Cys-2659/Cys-2672, and Cys-2674/Cys-2686. An EGF-like 42; calcium-binding domain is found at 2444–2484 (DLNECNQAPKPCNFICKNTEGSYQCSCPKGYILQEDGRSCK). A glycan (O-linked (Glc) serine) is linked at Ser-2465. One can recognise an EGF-like 43; calcium-binding domain in the interval 2485 to 2523 (DLDECATKQHNCQFLCVNTIGGFTCKCPPGFTQHHTSCI). The EGF-like 44; calcium-binding domain occupies 2524–2566 (DNNECTSDINLCGSKGICQNTPGSFTCECQRGFSLDQTGSSCE). Ser-2547 carries O-linked (Glc) serine glycosylation. The EGF-like 45; calcium-binding domain maps to 2567–2606 (DVDECEGNHRCQHGCQNIIGGYRCSCPQGYLQHYQWNQCV). The 41-residue stretch at 2607-2647 (DENECLSAHICGGASCHNTLGSYKCMCPAGFQYEQFSGGCQ) folds into the EGF-like 46; calcium-binding domain. The O-linked (Glc) serine glycan is linked to Ser-2628. In terms of domain architecture, EGF-like 47; calcium-binding spans 2648–2687 (DINECGSAQAPCSYGCSNTEGGYLCGCPPGYFRIGQGHCV). At Ser-2702 the chain carries Phosphoserine; by FAM20C. Ser-2709 is subject to Phosphoserine. A disordered region spans residues 2726–2746 (RGRKRRSTNETDASNIEDQSE). A glycan (N-linked (GlcNAc...) asparagine) is linked at Asn-2734. Over residues 2735–2746 (ETDASNIEDQSE) the composition is skewed to polar residues. Residues Asn-2750 and Asn-2767 are each glycosylated (N-linked (GlcNAc...) asparagine).

The protein belongs to the fibrillin family. In terms of assembly, interacts with COL16A1. Interacts with integrin alpha-V/beta-3. Interacts with ADAMTS10; this interaction promotes microfibril assembly. Interacts with THSD4; this interaction promotes fibril formation. Interacts (via N-terminal domain) with FBLN2 and FBLN5. Interacts with ELN. Forms a ternary complex with ELN and FBLN2 or FBLN5 and a significant interaction with ELN seen only in the presence of FBLN2 or FBLN5. Interacts (via N-terminal domain) with LTBP2 (via C-terminal domain) in a Ca(+2)-dependent manner. Interacts (via N-terminal domain) with LTBP1 (via C-terminal domain). Interacts with integrins ITGA5:ITGB1, ITGAV:ITGB3 and ITGAV:ITGB6. Interacts (via N-terminal domain) with BMP2, BMP4, BMP7, BMP10 and GDF5. Interacts (via N-terminal domain) with MFAP2 and MFAP5. Interacts with ADAMTSL5. Interacts with MFAP4. Interacts (via N-terminal domain) with TNFSF11 in a Ca(+2)-dependent manner. Interacts (via N-terminal domain) with EFEMP2; this interaction inhibits EFEMP2 binding to LOX and ELN. Post-translationally, cleavage of N- and C-terminus by furin is required for incorporation into the extracellular matrix and assembly into microfibrils. The C-terminus, which corresponds to the Asprosin chain, was initially thought to constitute a propeptide. Fibrillin-1 and Asprosin chains are still linked together during the secretion from cells, but are subsequently separated by furin, an essential step for incorporation of Fibrillin-1 into the nascent microfibrils. Forms intermolecular disulfide bonds either with other fibrillin-1 molecules or with other components of the microfibrils. In terms of processing, O-glycosylated on serine residues by POGLUT2 and POGLUT3 which is necessary for efficient protein secretion.

The protein localises to the secreted. The protein resides in the extracellular space. It is found in the extracellular matrix. In terms of biological role, structural component of the 10-12 nm diameter microfibrils of the extracellular matrix, which conveys both structural and regulatory properties to load-bearing connective tissues. Fibrillin-1-containing microfibrils provide long-term force bearing structural support. In tissues such as the lung, blood vessels and skin, microfibrils form the periphery of the elastic fiber, acting as a scaffold for the deposition of elastin. In addition, microfibrils can occur as elastin-independent networks in tissues such as the ciliary zonule, tendon, cornea and glomerulus where they provide tensile strength and have anchoring roles. Fibrillin-1 also plays a key role in tissue homeostasis through specific interactions with growth factors, such as the bone morphogenetic proteins (BMPs), growth and differentiation factors (GDFs) and latent transforming growth factor-beta-binding proteins (LTBPs), cell-surface integrins and other extracellular matrix protein and proteoglycan components. Regulates osteoblast maturation by controlling TGF-beta bioavailability and calibrating TGF-beta and BMP levels, respectively. Negatively regulates osteoclastogenesis by binding and sequestering an osteoclast differentiation and activation factor TNFSF11. This leads to disruption of TNFSF11-induced Ca(2+) signaling and impairment of TNFSF11-mediated nuclear translocation and activation of transcription factor NFATC1 which regulates genes important for osteoclast differentiation and function. Mediates cell adhesion via its binding to cell surface receptors integrins ITGAV:ITGB3 and ITGA5:ITGB1. Binds heparin and this interaction has an important role in the assembly of microfibrils. Its function is as follows. Adipokine secreted by white adipose tissue that plays an important regulatory role in the glucose metabolism of liver, muscle and pancreas. Hormone that targets the liver in response to fasting to increase plasma glucose levels. Binds the olfactory receptor OR4M1 at the surface of hepatocytes and promotes hepatocyte glucose release by activating the protein kinase A activity in the liver, resulting in rapid glucose release into the circulation. May act as a regulator of adaptive thermogenesis by inhibiting browning and energy consumption, while increasing lipid deposition in white adipose tissue. Also acts as an orexigenic hormone that increases appetite: crosses the blood brain barrier and exerts effects on the hypothalamus. In the arcuate nucleus of the hypothalamus, asprosin directly activates orexigenic AgRP neurons and indirectly inhibits anorexigenic POMC neurons, resulting in appetite stimulation. Activates orexigenic AgRP neurons via binding to the olfactory receptor OR4M1. May also play a role in sperm motility in testis via interaction with OR4M1 receptor. This chain is Fibrillin-1, found in Homo sapiens (Human).